A 154-amino-acid polypeptide reads, in one-letter code: MRVYFILILAVATVSGATSEMLSFQNAIQSSGGAKIETSAGRLLRAELTTDETYPEERTSLAAVEKLNAKTKDVLKDKWDAANVKYQSPFIYNDGIGQSIMKRNIDPDKVFKYLTQQKLDRTIGENPQYGLWKAYLELWKKNHPRWKSKLQTVD.

The signal sequence occupies residues 1–16 (MRVYFILILAVATVSG). Positions 42-58 (RLLRAELTTDETYPEER) match the RxLR-dEER motif.

This sequence belongs to the RxLR effector family.

Its subcellular location is the secreted. It localises to the host nucleus. It is found in the host cytoplasm. In terms of biological role, effector that enhances P.infestans colonization of Nicotiana benthamiana leaves. The chain is RxLR effector protein PITG_12737 from Phytophthora infestans (strain T30-4) (Potato late blight agent).